The following is a 159-amino-acid chain: MPKRETKKIKPSQEVIKEGPFLVAIHLKGIYMSNYTNSPCAACKFLRRKCTSDCVFAPYFPPEEPTKFANVHRIFGASNVSKILHEVAPHQREDAVNSLAYEAEARLKDPVYGCVGAISVLQRQVLRLQRELEETNADLMRYAGCLGGETTSAYGGRRG.

The region spanning 38–139 (SPCAACKFLR…RELEETNADL (102 aa)) is the LOB domain.

This sequence belongs to the LOB domain-containing protein family. In terms of tissue distribution, expressed in young shoots, roots, stems, leaves and flowers.

The protein is LOB domain-containing protein 25 (LBD25) of Arabidopsis thaliana (Mouse-ear cress).